The sequence spans 150 residues: 6,7-dimethyl-8-ribityllumazine synthase (150 aa).

Residues Phe11, 43–45, and 67–69 each bind 5-amino-6-(D-ribitylamino)uracil; these read VYD and AVI. 72–73 provides a ligand contact to (2S)-2-hydroxy-3-oxobutyl phosphate; that stretch reads AT. Catalysis depends on His75, which acts as the Proton donor. Leu100 contributes to the 5-amino-6-(D-ribitylamino)uracil binding site. (2S)-2-hydroxy-3-oxobutyl phosphate is bound at residue Arg115.

Belongs to the DMRL synthase family.

The enzyme catalyses (2S)-2-hydroxy-3-oxobutyl phosphate + 5-amino-6-(D-ribitylamino)uracil = 6,7-dimethyl-8-(1-D-ribityl)lumazine + phosphate + 2 H2O + H(+). The protein operates within cofactor biosynthesis; riboflavin biosynthesis; riboflavin from 2-hydroxy-3-oxobutyl phosphate and 5-amino-6-(D-ribitylamino)uracil: step 1/2. Its function is as follows. Catalyzes the formation of 6,7-dimethyl-8-ribityllumazine by condensation of 5-amino-6-(D-ribitylamino)uracil with 3,4-dihydroxy-2-butanone 4-phosphate. This is the penultimate step in the biosynthesis of riboflavin. In Pyrobaculum neutrophilum (strain DSM 2338 / JCM 9278 / NBRC 100436 / V24Sta) (Thermoproteus neutrophilus), this protein is 6,7-dimethyl-8-ribityllumazine synthase.